Consider the following 373-residue polypeptide: Coiled-coil domain-containing protein 34 (373 aa).

Disordered regions lie at residues 1–112 (MWAA…SLRG) and 118–137 (CAST…QVRL). A Phosphoserine modification is found at serine 52. The span at 61-76 (NSTRSLLSPLGHQSFQ) shows a compositional bias: polar residues. The segment covering 77–101 (FDEDDGDGEDEEDVDDEEDVDEDAH) has biased composition (acidic residues). A coiled-coil region spans residues 152–286 (KEKEERDRLQ…QEWLENAKHK (135 aa)). The tract at residues 324 to 352 (IHMPPPKEAKDLSGRKSKRPVISQPHKSS) is disordered. Residues 328-337 (PPKEAKDLSG) are compositionally biased toward basic and acidic residues.

Expressed in sperm.

The protein localises to the cell projection. The protein resides in the cilium. It localises to the flagellum. Its function is as follows. Involved in spermatogenesis. Has a probable role in anterograde intraflagellar transport which is essential for the formation of sperm flagella. The polypeptide is Coiled-coil domain-containing protein 34 (CCDC34) (Homo sapiens (Human)).